A 146-amino-acid polypeptide reads, in one-letter code: Extracellular globin-2A (146 aa).

The 143-residue stretch at 4–146 folds into the Globin domain; it reads HCGPLQRLKV…EVIYPGIKHD (143 aa). A disulfide bond links Cys-5 and Cys-134. His-97 contacts heme b.

This sequence belongs to the globin family. As to quaternary structure, disulfide bonded trimer of chains IIA, IIB, and IIC.

This chain is Extracellular globin-2A, found in Tylorrhynchus heterochetus (Japanese palolo worm).